The following is a 208-amino-acid chain: RNA chaperone ProQ (208 aa).

Residues 106 to 127 (SKAKVATRRKEQAKKAREEAKA) show a composition bias toward basic and acidic residues. Residues 106–154 (SKAKVATRRKEQAKKAREEAKAKKTARAATPPKRRPQPAAKKVEQPVET) form a disordered region.

The protein belongs to the ProQ family.

The protein resides in the cytoplasm. Functionally, RNA chaperone with significant RNA binding, RNA strand exchange and RNA duplexing activities. The chain is RNA chaperone ProQ from Aliivibrio fischeri (strain ATCC 700601 / ES114) (Vibrio fischeri).